Consider the following 37-residue polypeptide: Esculentin-2P (37 aa).

A disulfide bridge connects residues Cys31 and Cys37.

Expressed by the skin glands.

The protein localises to the secreted. Its function is as follows. Antibacterial activity against Gram-negative bacterium E.coli. In Lithobates pipiens (Northern leopard frog), this protein is Esculentin-2P.